The primary structure comprises 860 residues: Alanine--tRNA ligase (860 aa).

4 residues coordinate Zn(2+): His563, His567, Cys665, and His669.

Belongs to the class-II aminoacyl-tRNA synthetase family. The cofactor is Zn(2+).

It is found in the cytoplasm. It carries out the reaction tRNA(Ala) + L-alanine + ATP = L-alanyl-tRNA(Ala) + AMP + diphosphate. Its function is as follows. Catalyzes the attachment of alanine to tRNA(Ala) in a two-step reaction: alanine is first activated by ATP to form Ala-AMP and then transferred to the acceptor end of tRNA(Ala). Also edits incorrectly charged Ser-tRNA(Ala) and Gly-tRNA(Ala) via its editing domain. In Vibrio parahaemolyticus serotype O3:K6 (strain RIMD 2210633), this protein is Alanine--tRNA ligase.